The following is a 91-amino-acid chain: Probable Fe(2+)-trafficking protein (91 aa).

Belongs to the Fe(2+)-trafficking protein family.

Could be a mediator in iron transactions between iron acquisition and iron-requiring processes, such as synthesis and/or repair of Fe-S clusters in biosynthetic enzymes. The protein is Probable Fe(2+)-trafficking protein of Ralstonia pickettii (strain 12J).